A 157-amino-acid polypeptide reads, in one-letter code: Protein Smg (157 aa).

The protein belongs to the Smg family.

This Enterobacter sp. (strain 638) protein is Protein Smg.